The chain runs to 104 residues: uncharacterized protein (104 aa).

The disordered stretch occupies residues 55–104; that stretch reads RPFSSDRINRPFSPDKKGEPIFPDKRDRPFSPDRINRPFSPDKKGEPIFP.

It is found in the plastid. This is an uncharacterized protein from Euglena longa (Euglenophycean alga).